A 283-amino-acid chain; its full sequence is Methylamine utilization ferredoxin-type protein MauN (283 aa).

2 4Fe-4S ferredoxin-type domains span residues 217–248 (VRVSARNRDACDNCGACFSTCPEPHVIVPALK) and 251–280 (GSPLILSGDCINCGGCIDSCPNRVFAMASR). Residues C227, C230, C233, C237, C260, C263, C266, and C270 each coordinate [4Fe-4S] cluster.

It participates in one-carbon metabolism; methylamine degradation. Functionally, involved in electron transfer. The sequence is that of Methylamine utilization ferredoxin-type protein MauN (mauN) from Paracoccus denitrificans (strain Pd 1222).